We begin with the raw amino-acid sequence, 323 residues long: Palmitoyltransferase ZDHHC20-B (323 aa).

Residues 1-14 (MAPTHVLRCCQRGL) are Cytoplasmic-facing. Residues 15–35 (AWIPVIFIALVVCWSYYAYVV) traverse the membrane as a helical segment. At 36–41 (ELCLLV) the chain is on the lumenal side. The helical transmembrane segment at 42–62 (YLVVFHLSFVMFVWSYWKTIF) threads the bilayer. Residues 63–157 (TKPANPSKEF…NNCVGFSNYK (95 aa)) are Cytoplasmic-facing. In terms of domain architecture, DHHC spans 114–164 (RYCDRCQVIKPDRCHHCSACDMCVLKMDHHCPWVNNCVGFSNYKFFILFLT). C144 functions as the S-palmitoyl cysteine intermediate in the catalytic mechanism. The chain crosses the membrane as a helical span at residues 158–178 (FFILFLTYSLVYCLFIAASVL). The Lumenal portion of the chain corresponds to 179 to 195 (QYFIKFWTSDLPESHAK). A helical membrane pass occupies residues 196–219 (FHVLFLFFVAAMFCISILSLFTYH). At 220–323 (LWLVGKNRST…KQAKKKKTDE (104 aa)) the chain is on the cytoplasmic side.

The protein belongs to the DHHC palmitoyltransferase family.

Its subcellular location is the golgi apparatus membrane. The protein resides in the cell membrane. It is found in the cytoplasm. The protein localises to the perinuclear region. It localises to the endoplasmic reticulum membrane. Its subcellular location is the endoplasmic reticulum-Golgi intermediate compartment membrane. It carries out the reaction L-cysteinyl-[protein] + hexadecanoyl-CoA = S-hexadecanoyl-L-cysteinyl-[protein] + CoA. It catalyses the reaction L-cysteinyl-[protein] + tetradecanoyl-CoA = S-tetradecanoyl-L-cysteinyl-[protein] + CoA. The catalysed reaction is L-cysteinyl-[protein] + octadecanoyl-CoA = S-octadecanoyl-L-cysteinyl-[protein] + CoA. Palmitoyltransferase that could catalyze the addition of palmitate onto various protein substrates. Catalyzes palmitoylation of Cys residues on protein substrates and has a preference for acyl-CoA with C16 fatty acid chains but may also utilize acyl-CoA with C14 and C18 fatty acid chains. The chain is Palmitoyltransferase ZDHHC20-B (zdhhc20b) from Danio rerio (Zebrafish).